The sequence spans 220 residues: Superoxide dismutase [Fe] (220 aa).

The Fe cation site is built by His26, His73, Asp164, and His168.

The protein belongs to the iron/manganese superoxide dismutase family. As to quaternary structure, homodimer. It depends on Fe cation as a cofactor.

The catalysed reaction is 2 superoxide + 2 H(+) = H2O2 + O2. In terms of biological role, destroys superoxide anion radicals which are normally produced within the cells and which are toxic to biological systems. The protein is Superoxide dismutase [Fe] (sodB) of Campylobacter coli.